The following is a 289-amino-acid chain: ATP synthase gamma chain (289 aa).

Belongs to the ATPase gamma chain family. In terms of assembly, F-type ATPases have 2 components, CF(1) - the catalytic core - and CF(0) - the membrane proton channel. CF(1) has five subunits: alpha(3), beta(3), gamma(1), delta(1), epsilon(1). CF(0) has three main subunits: a, b and c.

The protein localises to the cell membrane. In terms of biological role, produces ATP from ADP in the presence of a proton gradient across the membrane. The gamma chain is believed to be important in regulating ATPase activity and the flow of protons through the CF(0) complex. This chain is ATP synthase gamma chain, found in Lactococcus lactis subsp. lactis (strain IL1403) (Streptococcus lactis).